A 305-amino-acid polypeptide reads, in one-letter code: tRNA dimethylallyltransferase (305 aa).

9 to 16 contributes to the ATP binding site; it reads GPTGAGKT. A substrate-binding site is contributed by 11–16; the sequence is TGAGKT. 2 interaction with substrate tRNA regions span residues 34–37 and 158–162; these read DSRQ and QRIVR.

This sequence belongs to the IPP transferase family. As to quaternary structure, monomer. The cofactor is Mg(2+).

The catalysed reaction is adenosine(37) in tRNA + dimethylallyl diphosphate = N(6)-dimethylallyladenosine(37) in tRNA + diphosphate. In terms of biological role, catalyzes the transfer of a dimethylallyl group onto the adenine at position 37 in tRNAs that read codons beginning with uridine, leading to the formation of N6-(dimethylallyl)adenosine (i(6)A). The polypeptide is tRNA dimethylallyltransferase (Oleidesulfovibrio alaskensis (strain ATCC BAA-1058 / DSM 17464 / G20) (Desulfovibrio alaskensis)).